The primary structure comprises 383 residues: 3-phytase (383 aa).

An N-terminal signal peptide occupies residues 1 to 26; the sequence is MNHSKTLLLTAAAGLMLTCGAVSSQA. Residues 27–29 constitute a propeptide that is removed on maturation; it reads KHK. The region spanning 30-362 is the BPP domain; that stretch reads LSDPYHFTVN…VPWERIADQI (333 aa).

The cofactor is Ca(2+).

The protein resides in the secreted. The catalysed reaction is 1D-myo-inositol hexakisphosphate + H2O = 1D-myo-inositol 1,2,4,5,6-pentakisphosphate + phosphate. Functionally, catalyzes the hydrolysis of inorganic orthophosphate from phytate. Only phytate, ADP, and ATP were hydrolyzed (100, 75, and 50% of the relative activity, respectively). This Bacillus subtilis protein is 3-phytase (phyC).